The following is a 201-amino-acid chain: Molybdenum cofactor guanylyltransferase (201 aa).

Residues 14–16 (LAG), Lys-31, and Asp-104 contribute to the GTP site. Asp-104 is a binding site for Mg(2+).

Belongs to the MobA family. Monomer. The cofactor is Mg(2+).

The protein localises to the cytoplasm. The catalysed reaction is Mo-molybdopterin + GTP + H(+) = Mo-molybdopterin guanine dinucleotide + diphosphate. Functionally, transfers a GMP moiety from GTP to Mo-molybdopterin (Mo-MPT) cofactor (Moco or molybdenum cofactor) to form Mo-molybdopterin guanine dinucleotide (Mo-MGD) cofactor. This chain is Molybdenum cofactor guanylyltransferase, found in Helicobacter pylori (strain G27).